Consider the following 336-residue polypeptide: Nicotinate-nucleotide--dimethylbenzimidazole phosphoribosyltransferase (336 aa).

The active-site Proton acceptor is the E304.

The protein belongs to the CobT family.

It carries out the reaction 5,6-dimethylbenzimidazole + nicotinate beta-D-ribonucleotide = alpha-ribazole 5'-phosphate + nicotinate + H(+). It functions in the pathway nucleoside biosynthesis; alpha-ribazole biosynthesis; alpha-ribazole from 5,6-dimethylbenzimidazole: step 1/2. Its function is as follows. Catalyzes the synthesis of alpha-ribazole-5'-phosphate from nicotinate mononucleotide (NAMN) and 5,6-dimethylbenzimidazole (DMB). This is Nicotinate-nucleotide--dimethylbenzimidazole phosphoribosyltransferase from Mesorhizobium japonicum (strain LMG 29417 / CECT 9101 / MAFF 303099) (Mesorhizobium loti (strain MAFF 303099)).